The primary structure comprises 213 residues: Cytochrome b6 (213 aa).

Residues 30 to 50 (IFYCLGGLTLLCFIIQCLTGV) form a helical membrane-spanning segment. Position 33 (Cys-33) interacts with heme c. Heme b-binding residues include His-84 and His-98. Transmembrane regions (helical) follow at residues 88 to 108 (CQLMILLVFLHMLRVYYTGAF), 114 to 134 (LNWVAGCFLLVLSLGLAFTGY), and 184 to 204 (LHVMILPAITIGFLVAHFIMI). Positions 185 and 200 each coordinate heme b.

Belongs to the cytochrome b family. PetB subfamily. In terms of assembly, the subunits of the cytochrome bc complex are a Rieske Fe-S protein (PetC), cytochrome b6 (PetB), subunit IV (PetD), and a diheme cytochrome c (PetX). It depends on heme b as a cofactor. Requires heme c as cofactor.

The protein resides in the cell membrane. Its function is as follows. Component of the cytochrome bc complex which donates electrons to the photosynthetic reaction center. This chain is Cytochrome b6, found in Heliobacterium modesticaldum (strain ATCC 51547 / Ice1).